A 301-amino-acid chain; its full sequence is MKLDYNSREIFFGNEALIVADMTKGSNGKPEFTNHKIVTGLVSVGSMEDQAETNSYPADDVPDHGVKKGATLLQGEMVFIQTDQALKEDMLGQQRTENGLGWSPTGNWKTKCVQYLIKGRKRDKVTGEFVDGYRVVVYPHLTPTAEATKESETDSVDGVDPIQWTLAVQATESDIYSNGGKKVPAIEYEIWGEQAKDFAKKMESGLFIMQPDTVLAGAITLVAPVIPNVTTATKGNNDGTIVVPDTLKDSKGGTVKVTSVIKDAHGKVATNGQLAPGVYIVTFSADGYEDVTAGVSVTDHS.

It belongs to the skunalikevirus tail tube protein family. Homohexamer. Interacts with the tail terminator protein.

It is found in the virion. Forms the cylindrical rigid tail tube with a 4 nm wide central channel for DNA ejection. The tube is composed of 31 hexameric rings. This is Tail tube protein from Lactococcus phage p2 (Lactococcus lactis bacteriophage p2).